The sequence spans 976 residues: Serine/threonine-protein kinase CLA4 (976 aa).

Residues 1-46 (MTSIYTSDLKNHRRAPPPPNGAAGSGSGSSSGSGSGSGSGSGSGSL) form a disordered region. Gly residues predominate over residues 23-43 (AGSGSGSSSGSGSGSGSGSGS). A PH domain is found at 73–184 (SKRQSGWVHV…WLDAFTTKCP (112 aa)). Positions 207 to 231 (LTNGSLNGNSSSSPTSGLSSSSVLT) are disordered. The CRIB domain maps to 237-250 (VSGPINFTHKVHVG). 2 disordered regions span residues 298 to 522 (GGNS…KIHP) and 559 to 658 (SKKS…QLKK). Composition is skewed to low complexity over residues 313 to 332 (NSKTNNNNNDPNNYSSAKNN) and 371 to 411 (LNGS…PLNN). Residues 430–440 (SGTSSDTYSNK) are compositionally biased toward polar residues. The segment covering 441–455 (NHQDRSGYEQQRQQR) has biased composition (basic and acidic residues). Low complexity predominate over residues 456–487 (TDSSQQQQQQQKQHQYQQKSQQQQQQPLSSHQ). A compositionally biased stretch (pro residues) spans 496-505 (QVPPTLPSSG). A compositionally biased stretch (low complexity) spans 559–583 (SKKSQQQLASKQPSPPSSQQQQQKP). The span at 622 to 635 (NETSGVSKTPSPTD) shows a compositional bias: polar residues. Residues 685-940 (FRIVEKAGQG…TDELLEHSFI (256 aa)) enclose the Protein kinase domain. Residues 691 to 699 (AGQGASGNV) and Lys-715 contribute to the ATP site. Residue Asp-808 is the Proton acceptor of the active site.

This sequence belongs to the protein kinase superfamily. STE Ser/Thr protein kinase family. STE20 subfamily. As to quaternary structure, interacts (via the CRIB domain) with CDC42.

The enzyme catalyses L-seryl-[protein] + ATP = O-phospho-L-seryl-[protein] + ADP + H(+). The catalysed reaction is L-threonyl-[protein] + ATP = O-phospho-L-threonyl-[protein] + ADP + H(+). Functionally, ser/Thr kinase required for wild-type filamentous growth, chlamydospore formation, and virulence in mouse systemic infection. The protein is Serine/threonine-protein kinase CLA4 (CLA4) of Candida albicans (strain SC5314 / ATCC MYA-2876) (Yeast).